The sequence spans 352 residues: Small ribosomal subunit biogenesis GTPase RsgA 2 (352 aa).

The region spanning 100–257 is the CP-type G domain; it reads RQDGQIIATN…VIDTPGMREL (158 aa). GTP-binding positions include 147 to 150 and 199 to 207; these read TKAD and GSSGVGKST. Residues cysteine 278, cysteine 283, histidine 285, and cysteine 291 each contribute to the Zn(2+) site.

It belongs to the TRAFAC class YlqF/YawG GTPase family. RsgA subfamily. Monomer. Associates with 30S ribosomal subunit, binds 16S rRNA. Requires Zn(2+) as cofactor.

It localises to the cytoplasm. Functionally, one of several proteins that assist in the late maturation steps of the functional core of the 30S ribosomal subunit. Helps release RbfA from mature subunits. May play a role in the assembly of ribosomal proteins into the subunit. Circularly permuted GTPase that catalyzes slow GTP hydrolysis, GTPase activity is stimulated by the 30S ribosomal subunit. The protein is Small ribosomal subunit biogenesis GTPase RsgA 2 of Lactiplantibacillus plantarum (strain ATCC BAA-793 / NCIMB 8826 / WCFS1) (Lactobacillus plantarum).